Reading from the N-terminus, the 296-residue chain is Formamidopyrimidine-DNA glycosylase (296 aa).

Proline 2 functions as the Schiff-base intermediate with DNA in the catalytic mechanism. Glutamate 3 serves as the catalytic Proton donor. Lysine 58 serves as the catalytic Proton donor; for beta-elimination activity. Positions 104, 126, and 169 each coordinate DNA. An FPG-type zinc finger spans residues 260–296; that stretch reads SVYDRESQACRTPGCGGTVARIVQAGRSTFYCATCQK. Arginine 286 acts as the Proton donor; for delta-elimination activity in catalysis.

The protein belongs to the FPG family. As to quaternary structure, monomer. Zn(2+) serves as cofactor.

The enzyme catalyses Hydrolysis of DNA containing ring-opened 7-methylguanine residues, releasing 2,6-diamino-4-hydroxy-5-(N-methyl)formamidopyrimidine.. It carries out the reaction 2'-deoxyribonucleotide-(2'-deoxyribose 5'-phosphate)-2'-deoxyribonucleotide-DNA = a 3'-end 2'-deoxyribonucleotide-(2,3-dehydro-2,3-deoxyribose 5'-phosphate)-DNA + a 5'-end 5'-phospho-2'-deoxyribonucleoside-DNA + H(+). Functionally, involved in base excision repair of DNA damaged by oxidation or by mutagenic agents. Acts as a DNA glycosylase that recognizes and removes damaged bases. Has a preference for oxidized purines, such as 7,8-dihydro-8-oxoguanine (8-oxoG). Has AP (apurinic/apyrimidinic) lyase activity and introduces nicks in the DNA strand. Cleaves the DNA backbone by beta-delta elimination to generate a single-strand break at the site of the removed base with both 3'- and 5'-phosphates. The sequence is that of Formamidopyrimidine-DNA glycosylase from Rhizobium johnstonii (strain DSM 114642 / LMG 32736 / 3841) (Rhizobium leguminosarum bv. viciae).